We begin with the raw amino-acid sequence, 152 residues long: FMN reductase (NADH) RutF (152 aa).

It belongs to the non-flavoprotein flavin reductase family. RutF subfamily.

It carries out the reaction FMNH2 + NAD(+) = FMN + NADH + 2 H(+). Functionally, catalyzes the reduction of FMN to FMNH2 which is used to reduce pyrimidine by RutA via the Rut pathway. The sequence is that of FMN reductase (NADH) RutF from Shigella sonnei (strain Ss046).